Consider the following 295-residue polypeptide: Putative attaching and effacing protein homolog (295 aa).

Positions 1–25 are cleaved as a signal peptide; sequence MSHYKTGHKQPRFRYSVLARCVAWA.

Belongs to the intimin/invasin family.

The chain is Putative attaching and effacing protein homolog (eaeH) from Escherichia coli (strain K12).